The primary structure comprises 202 residues: Outer-membrane lipoprotein carrier protein (202 aa).

Residues Met1–Ser18 form the signal peptide.

The protein belongs to the LolA family. Monomer.

It localises to the periplasm. In terms of biological role, participates in the translocation of lipoproteins from the inner membrane to the outer membrane. Only forms a complex with a lipoprotein if the residue after the N-terminal Cys is not an aspartate (The Asp acts as a targeting signal to indicate that the lipoprotein should stay in the inner membrane). This is Outer-membrane lipoprotein carrier protein from Legionella pneumophila (strain Paris).